We begin with the raw amino-acid sequence, 246 residues long: 1-(5-phosphoribosyl)-5-[(5-phosphoribosylamino)methylideneamino] imidazole-4-carboxamide isomerase (246 aa).

The Proton acceptor role is filled by aspartate 8. Aspartate 129 serves as the catalytic Proton donor.

This sequence belongs to the HisA/HisF family.

It is found in the cytoplasm. The catalysed reaction is 1-(5-phospho-beta-D-ribosyl)-5-[(5-phospho-beta-D-ribosylamino)methylideneamino]imidazole-4-carboxamide = 5-[(5-phospho-1-deoxy-D-ribulos-1-ylimino)methylamino]-1-(5-phospho-beta-D-ribosyl)imidazole-4-carboxamide. Its pathway is amino-acid biosynthesis; L-histidine biosynthesis; L-histidine from 5-phospho-alpha-D-ribose 1-diphosphate: step 4/9. The protein is 1-(5-phosphoribosyl)-5-[(5-phosphoribosylamino)methylideneamino] imidazole-4-carboxamide isomerase of Nitrobacter hamburgensis (strain DSM 10229 / NCIMB 13809 / X14).